Consider the following 55-residue polypeptide: Photosystem I reaction center subunit IX (55 aa).

A helical membrane pass occupies residues 7 to 27; that stretch reads YLSVAPVLSTLWFGSLAGLLI.

Belongs to the PsaJ family.

The protein localises to the plastid. It is found in the chloroplast thylakoid membrane. Functionally, may help in the organization of the PsaE and PsaF subunits. The sequence is that of Photosystem I reaction center subunit IX from Gossypium barbadense (Sea Island cotton).